The sequence spans 525 residues: Erythropoietin receptor (525 aa).

Positions 1 to 32 are cleaved as a signal peptide; sequence MGAPSSLLFSTAHWRTVPFLLAFWVLLSTGTA. Topologically, residues 33–249 are extracellular; the sequence is EDPTMTPEFL…TIATIIDLRL (217 aa). Cysteines 58 and 68 form a disulfide. 4 N-linked (GlcNAc...) asparagine glycosylation sites follow: N77, N100, N149, and N185. C91 and C107 are oxidised to a cystine. The region spanning 146-246 is the Fibronectin type-III domain; that stretch reads PPLNVTVKEK…APITIATIID (101 aa). Residues 232–236 carry the WSXWS motif motif; the sequence is WSDWT. Residues 250–270 form a helical membrane-spanning segment; that stretch reads LLLLSIAIFVALIAGVGVYIF. At 271–525 the chain is on the cytoplasmic side; sequence MRHGMYLKHK…NFLAPIYSQS (255 aa). A Box 1 motif motif is present at residues 281-289; that stretch reads VWPQVPTPE. 2 disordered regions span residues 434 to 459 and 492 to 513; these read APRM…QSIP and LDMS…QNSP. A compositionally biased stretch (polar residues) spans 447-459; the sequence is ENSVSSDGKQSIP. An ITIM motif motif is present at residues 487–492; sequence LKYAYL.

This sequence belongs to the type I cytokine receptor family. Type 1 subfamily. In terms of tissue distribution, expressed in the ventral blood island from stage 28 through to stage 36. Expressed in the circulating blood by stage 40. In the adult, highly expressed in peripheral blood cells including immature erythrocytes and basophils, and moderately expressed in the hematopoietic organs: liver, kidney and spleen. Expressed at a low level in adult brain.

Its subcellular location is the cell membrane. Receptor for erythropoietin. Mediates erythropoietin-induced erythroblast proliferation and differentiation. The polypeptide is Erythropoietin receptor (Xenopus laevis (African clawed frog)).